The primary structure comprises 423 residues: Hydroxymethylglutaryl-CoA synthase-like protein AKT4-1 (423 aa).

This sequence belongs to the thiolase-like superfamily. HMG-CoA synthase family.

It functions in the pathway mycotoxin biosynthesis. Its function is as follows. Hydroxymethylglutaryl-CoA synthase-like protein; part of the gene clusters that mediate the biosynthesis of the host-selective toxins (HSTs) AK-toxins responsible for Japanese pear black spot disease by the Japanese pear pathotype. AK-toxins are esters of 9,10-epoxy 8-hydroxy 9-methyldecatrienoic acid (EDA). On cellular level, AK-toxins affect plasma membrane of susceptible cells and cause a sudden increase in loss of K(+) after a few minutes of toxin treatment. The acyl-CoA ligase AKT1, the hydrolase AKT2 and enoyl-CoA hydratase AKT3 are all involved in the biosynthesis of the AK-, AF- and ACT-toxin common 9,10-epoxy-8-hydroxy-9-methyl-decatrienoic acid (EDA) structural moiety. Part of the EDA biosynthesis occurs in the peroxisome since these 3 enzymes are localized in peroxisomes. The exact roles of the 3 enzymes, as well as of additional AK-toxin clusters enzymes, including AKT4, AKT6 and AKTS1, have still to be elucidated. The Cytochrome P450 monooxygenase AKT7 on the other side functions to limit production of EDA and AK-toxin, probably via the catalysis of a side reaction of EDA or its precursor. The chain is Hydroxymethylglutaryl-CoA synthase-like protein AKT4-1 from Alternaria alternata (Alternaria rot fungus).